The following is a 484-amino-acid chain: SPI-2 type 3 secretion system translocon protein SctE (484 aa).

2 helical membrane passes run 85-105 (FLQT…LNVF) and 152-172 (GIFG…IGAL). 2 coiled-coil regions span residues 107–152 (NNAQ…RKAG) and 413–457 (NTEK…LYKG).

This sequence belongs to the SctE/SipB/YopB family. The core secretion machinery of the T3SS is composed of approximately 20 different proteins, including cytoplasmic components, a base, an export apparatus and a needle. This subunit is involved in the formation of a pore, called the translocon, in host membrane. May form a complex with SseB and SseD/SctB2. SseB is required for correct localization of SseC/SctE2 on the bacterial cell surface.

It localises to the secreted. The protein resides in the cell surface. The protein localises to the host membrane. Functionally, component of the type III secretion system 2 (SPI-2 T3SS), also called injectisome, which is used to inject bacterial effector proteins into eukaryotic host cells. SseC/SctE2 and SseD/SctB2 are inserted into the host membrane where they form a pore and allow the translocation of effector proteins into the cytosol of target cells. In terms of biological role, required for the translocation of SPI-2 effector proteins. Required for systemic Salmonella infection of the mouse. Essential for SpvB-induced actin depolymerization in the host cell cytoplasm. This Salmonella typhimurium (strain LT2 / SGSC1412 / ATCC 700720) protein is SPI-2 type 3 secretion system translocon protein SctE.